Here is a 240-residue protein sequence, read N- to C-terminus: Ribonuclease 3 (240 aa).

The RNase III domain maps to 13-143; that stretch reads DHASLLEALG…LLGAVHLQHG (131 aa). Residue E53 coordinates Mg(2+). The active site involves D57. Residues D129 and E132 each coordinate Mg(2+). The active site involves E132. The DRBM domain occupies 170-238; that stretch reads DWKTSLQELT…AGAAYQALTA (69 aa).

It belongs to the ribonuclease III family. Homodimer. Requires Mg(2+) as cofactor.

It is found in the cytoplasm. It catalyses the reaction Endonucleolytic cleavage to 5'-phosphomonoester.. Functionally, digests double-stranded RNA. Involved in the processing of primary rRNA transcript to yield the immediate precursors to the large and small rRNAs (23S and 16S). Processes some mRNAs, and tRNAs when they are encoded in the rRNA operon. Processes pre-crRNA and tracrRNA of type II CRISPR loci if present in the organism. The protein is Ribonuclease 3 of Nocardia farcinica (strain IFM 10152).